Consider the following 570-residue polypeptide: 4-hydroxy-7-methoxy-3-oxo-3,4-dihydro-2H-1,4-benzoxazin-2-yl glucoside beta-D-glucosidase 1c, chloroplastic (570 aa).

The transit peptide at 1–50 (MALLAAATLNPTTHLSIRSRAGHNSENLWLRSAASSQKSKGRFCNLTVRA) directs the protein to the chloroplast. A beta-D-glucoside contacts are provided by residues Gln92, His194, and 239–240 (NE). Glu240 acts as the Proton donor in catalysis. The cysteines at positions 259 and 265 are disulfide-linked. A beta-D-glucoside contacts are provided by residues Tyr383, Glu456, Trp504, 511–512 (EW), and Phe520. Glu456 acts as the Nucleophile in catalysis.

The protein belongs to the glycosyl hydrolase 1 family. Homo- and heterohexamers. Expressed in young seedlings early after germination.

It is found in the plastid. It localises to the chloroplast. The enzyme catalyses Hydrolysis of terminal, non-reducing beta-D-glucosyl residues with release of beta-D-glucose.. It catalyses the reaction DIMBOA beta-D-glucoside + H2O = DIMBOA + D-glucose. It carries out the reaction DIBOA beta-D-glucoside + H2O = DIBOA + D-glucose. In terms of biological role, acts in defense of young plant parts against pests via the production of hydroxamic acids from hydroxamic acid glucosides. Enzymatic activity is highly correlated with plant growth. The preferred substrate is DIMBOA-beta-D-glucoside. In Triticum aestivum (Wheat), this protein is 4-hydroxy-7-methoxy-3-oxo-3,4-dihydro-2H-1,4-benzoxazin-2-yl glucoside beta-D-glucosidase 1c, chloroplastic (GLU1C).